Consider the following 255-residue polypeptide: Imidazole glycerol phosphate synthase subunit HisF (255 aa).

Catalysis depends on residues aspartate 12 and aspartate 131.

It belongs to the HisA/HisF family. Heterodimer of HisH and HisF.

Its subcellular location is the cytoplasm. It catalyses the reaction 5-[(5-phospho-1-deoxy-D-ribulos-1-ylimino)methylamino]-1-(5-phospho-beta-D-ribosyl)imidazole-4-carboxamide + L-glutamine = D-erythro-1-(imidazol-4-yl)glycerol 3-phosphate + 5-amino-1-(5-phospho-beta-D-ribosyl)imidazole-4-carboxamide + L-glutamate + H(+). It functions in the pathway amino-acid biosynthesis; L-histidine biosynthesis; L-histidine from 5-phospho-alpha-D-ribose 1-diphosphate: step 5/9. Its function is as follows. IGPS catalyzes the conversion of PRFAR and glutamine to IGP, AICAR and glutamate. The HisF subunit catalyzes the cyclization activity that produces IGP and AICAR from PRFAR using the ammonia provided by the HisH subunit. The polypeptide is Imidazole glycerol phosphate synthase subunit HisF (Zymomonas mobilis subsp. mobilis (strain ATCC 31821 / ZM4 / CP4)).